The primary structure comprises 246 residues: Putative protein phosphatase 2C-type (246 aa).

The PPM-type phosphatase domain occupies 2 to 240 (KISLKTDIGQ…DNITIALVHN (239 aa)). Mn(2+) is bound by residues D36, G37, D192, and D231.

It depends on Mg(2+) as a cofactor. The cofactor is Mn(2+).

It carries out the reaction O-phospho-L-seryl-[protein] + H2O = L-seryl-[protein] + phosphate. The catalysed reaction is O-phospho-L-threonyl-[protein] + H2O = L-threonyl-[protein] + phosphate. This is Putative protein phosphatase 2C-type from Streptococcus pyogenes serotype M6 (strain ATCC BAA-946 / MGAS10394).